The primary structure comprises 212 residues: Peptide methionine sulfoxide reductase MsrA (212 aa).

Cys-52 is an active-site residue.

It belongs to the MsrA Met sulfoxide reductase family.

It catalyses the reaction L-methionyl-[protein] + [thioredoxin]-disulfide + H2O = L-methionyl-(S)-S-oxide-[protein] + [thioredoxin]-dithiol. The catalysed reaction is [thioredoxin]-disulfide + L-methionine + H2O = L-methionine (S)-S-oxide + [thioredoxin]-dithiol. In terms of biological role, has an important function as a repair enzyme for proteins that have been inactivated by oxidation. Catalyzes the reversible oxidation-reduction of methionine sulfoxide in proteins to methionine. The sequence is that of Peptide methionine sulfoxide reductase MsrA from Shigella boydii serotype 18 (strain CDC 3083-94 / BS512).